The primary structure comprises 457 residues: NADH-quinone oxidoreductase subunit D (457 aa).

The segment at 1–23 (MSTHTETPVDGSAETITGAQPYE) is disordered.

Belongs to the complex I 49 kDa subunit family. As to quaternary structure, NDH-1 is composed of 14 different subunits. Subunits NuoB, C, D, E, F, and G constitute the peripheral sector of the complex.

It is found in the cell membrane. It carries out the reaction a quinone + NADH + 5 H(+)(in) = a quinol + NAD(+) + 4 H(+)(out). Functionally, NDH-1 shuttles electrons from NADH, via FMN and iron-sulfur (Fe-S) centers, to quinones in the respiratory chain. The immediate electron acceptor for the enzyme in this species is believed to be a menaquinone. Couples the redox reaction to proton translocation (for every two electrons transferred, four hydrogen ions are translocated across the cytoplasmic membrane), and thus conserves the redox energy in a proton gradient. The chain is NADH-quinone oxidoreductase subunit D from Parafrankia sp. (strain EAN1pec).